The following is a 562-amino-acid chain: Nucleoprotein (562 aa).

A binding site for the cap structure m7GTP region spans residues 53–238 (MRRVKRDDSD…ITQEESQINI (186 aa)). Mn(2+)-binding residues include Asp-381 and Glu-383. Residues Glu-391, Cys-498, His-501, and Cys-522 each contribute to the Zn(2+) site. Asp-526 is a binding site for Mn(2+).

It belongs to the arenaviridae nucleocapsid protein family. In terms of assembly, homomultimerizes to form the nucleocapsid. Binds to viral genomic RNA. Interacts with glycoprotein G2. Interacts with protein Z; this interaction probably directs the encapsidated genome to budding sites. Interacts with protein L; this interaction does not interfere with Z-L interaction. Interacts with host IKBKE (via Protein kinase domain); the interaction inhibits IKBKE kinase activity.

Its subcellular location is the virion. The protein localises to the host cytoplasm. Its function is as follows. Encapsidates the genome, protecting it from nucleases. The encapsidated genomic RNA is termed the nucleocapsid (NC). Serves as template for viral transcription and replication. The increased presence of protein N in host cell does not seem to trigger the switch from transcription to replication as observed in other negative strain RNA viruses. Through the interaction with host IKBKE, strongly inhibits the phosphorylation and nuclear translocation of host IRF3, a protein involved in interferon activation pathway, leading to the inhibition of interferon-beta and IRF3-dependent promoters activation. Also encodes a functional 3'-5' exoribonuclease that degrades preferentially dsRNA substrates and thereby participates in the suppression of interferon induction. This is Nucleoprotein from Neotoma (wood rats).